A 262-amino-acid polypeptide reads, in one-letter code: tRNA pseudouridine synthase A (262 aa).

Catalysis depends on Asp-54, which acts as the Nucleophile. Tyr-113 is a substrate binding site.

The protein belongs to the tRNA pseudouridine synthase TruA family. Homodimer.

The catalysed reaction is uridine(38/39/40) in tRNA = pseudouridine(38/39/40) in tRNA. Functionally, formation of pseudouridine at positions 38, 39 and 40 in the anticodon stem and loop of transfer RNAs. The polypeptide is tRNA pseudouridine synthase A (Lactobacillus acidophilus (strain ATCC 700396 / NCK56 / N2 / NCFM)).